Consider the following 495-residue polypeptide: MGTEAEQPSPPSPPAQQQEQTNPPLWNAQNQKPARLYRLVLFFIAGSLAAWTIHALSNSNLVWKLRQLHHLPTAHYLQTRDEFAVYSVEELNAFKEIYDKSVSDSVGASYTKDEQTSINEALVSLRMAQDMYLAGKDDKASRLFEHALALAPRHPEVLLRYGEFLEHSQRNIVLADQYYFQALTISPSNSEALANRQRTADVVQTLDERRLQSLDSKRDALSAIHESNGALRRAKKEAYFQHIYHSVGIEGNTMTLAQTRSILETRMAVDGKSIDEHNEILGMDLAMKYINASLVQKIDITIKDILELHRRVLGHVDPIEGGEFRRNQVYVGGHVPPGPGDLALLMQRFERWLNSEHSSTLHPVNYAALAHYKLVHIHPFIDGNGRTSRLLMNTLLMRAGYPPVIIPKQQRNKYYHFLKLANEGDIRPFVRFIADCTEKTLDLYLWATSDLPQQIPMLIQTESEAGERLAQMQSPNVAQRSSILEFYESGSGALP.

The disordered stretch occupies residues Met-1 to Asn-27. Residues Leu-36–Ala-55 traverse the membrane as a helical segment. 2 TPR repeats span residues Ala-121–His-154 and Pro-155–Asn-189. The Inhibitory (S/T)XXXE(G/N) motif motif lies at Ser-246–Gly-251. Residues Glu-250 and Val-331 to His-334 each bind ATP. One can recognise a Fido domain in the interval Ile-300–Asp-435. Residue His-378 is part of the active site. Residues Asp-382–Arg-389, Tyr-414–Tyr-415, and Asn-422 contribute to the ATP site.

Belongs to the fic family. Homodimer.

Its subcellular location is the membrane. The enzyme catalyses L-tyrosyl-[protein] + ATP = O-(5'-adenylyl)-L-tyrosyl-[protein] + diphosphate. It catalyses the reaction L-threonyl-[protein] + ATP = 3-O-(5'-adenylyl)-L-threonyl-[protein] + diphosphate. The catalysed reaction is 3-O-(5'-adenylyl)-L-threonyl-[protein] + H2O = L-threonyl-[protein] + AMP + H(+). With respect to regulation, the side chain of Glu-250 determines which of the two opposing activities (AMPylase or de-AMPylase) will take place. In response to endoplasmic reticulum stress, mediates de-AMPylase activity. Adenylyltransferase activity is inhibited by the inhibitory helix present at the N-terminus: Glu-250 binds ATP and competes with ATP-binding at Arg-389, thereby preventing adenylyltransferase activity. In unstressed cells, disengagement of Glu-250 promotes adenylyltransferase activity. Activation dissociates ATP-binding from Glu-250, allowing ordered binding of the entire ATP moiety with the alpha-phosphate in an orientation that is productive for accepting an incoming target hydroxyl side chain. Protein that can both mediate the addition of adenosine 5'-monophosphate (AMP) to specific residues of target proteins (AMPylation), and the removal of the same modification from target proteins (de-AMPylation), depending on the context. The side chain of Glu-250 determines which of the two opposing activities (AMPylase or de-AMPylase) will take place. Acts as a key regulator of the unfolded protein response (UPR) by mediating AMPylation or de-AMPylation of Hsc70-3/BiP. In unstressed cells, acts as an adenylyltransferase by mediating AMPylation of Hsc70-3/BiP at 'Thr-518', thereby inactivating it. In response to endoplasmic reticulum stress, acts as a phosphodiesterase by mediating removal of ATP (de-AMPylation) from Hsc70-3/BiP at 'Thr-518', leading to restore HSPA5/BiP activity. This is Protein adenylyltransferase Fic from Drosophila yakuba (Fruit fly).